Reading from the N-terminus, the 1022-residue chain is rDNA transcriptional regulator POL5 (1022 aa).

Composition is skewed to acidic residues over residues 706-719, 728-748, and 781-802; these read EEFE…DASE, SESE…EDEA, and DLDQ…ESMD. Disordered regions lie at residues 706-748 and 778-805; these read EEFE…EDEA and GEVD…DDEK. Serine 789 bears the Phosphoserine mark.

This sequence belongs to the MYBBP1A family. As to quaternary structure, interacts with FRK1.

It localises to the nucleus. The protein resides in the nucleolus. The enzyme catalyses DNA(n) + a 2'-deoxyribonucleoside 5'-triphosphate = DNA(n+1) + diphosphate. Stimulated by PCNA and inhibited by aphidicolin. In terms of biological role, plays an important role in the regulation of rRNA transcription. Binds near or at the enhancer region of rRNA repeating units. May have DNA polymerase activity, but it is not required for in vivo function. The polypeptide is rDNA transcriptional regulator POL5 (Saccharomyces cerevisiae (strain ATCC 204508 / S288c) (Baker's yeast)).